The sequence spans 428 residues: Elongation factor 1-alpha (428 aa).

Positions K5–V217 constitute a tr-type G domain. A G1 region spans residues G14–S21. GTP is bound at residue G14–S21. Residue S21 participates in Mg(2+) binding. Positions G68–D72 are G2. The interval D89 to G92 is G3. Residues D89–H93 and N144–D147 contribute to the GTP site. Positions N144–D147 are G4. The G5 stretch occupies residues S181–W183.

This sequence belongs to the TRAFAC class translation factor GTPase superfamily. Classic translation factor GTPase family. EF-Tu/EF-1A subfamily.

It localises to the cytoplasm. The catalysed reaction is GTP + H2O = GDP + phosphate + H(+). In terms of biological role, GTP hydrolase that promotes the GTP-dependent binding of aminoacyl-tRNA to the A-site of ribosomes during protein biosynthesis. This chain is Elongation factor 1-alpha, found in Pyrococcus furiosus (strain ATCC 43587 / DSM 3638 / JCM 8422 / Vc1).